A 507-amino-acid polypeptide reads, in one-letter code: Maturase K (507 aa).

The protein belongs to the intron maturase 2 family. MatK subfamily.

It localises to the plastid. It is found in the chloroplast. Functionally, usually encoded in the trnK tRNA gene intron. Probably assists in splicing its own and other chloroplast group II introns. This chain is Maturase K, found in Lyonia lucida (Fetterbush).